We begin with the raw amino-acid sequence, 493 residues long: UDP-N-acetylmuramoyl-L-alanyl-D-glutamate--L-lysine ligase (493 aa).

Residue Ser-30 coordinates UDP-N-acetyl-alpha-D-muramoyl-L-alanyl-D-glutamate. 110–116 contributes to the ATP binding site; that stretch reads GTNGKTS. UDP-N-acetyl-alpha-D-muramoyl-L-alanyl-D-glutamate-binding positions include Asn-151, 152–153, Ser-179, and Arg-187; that span reads TT. The residue at position 219 (Lys-219) is an N6-carboxylysine. Residues 406–409 carry the L-lysine recognition motif motif; that stretch reads DNPA.

The protein belongs to the MurCDEF family. MurE subfamily. Requires Mg(2+) as cofactor. Carboxylation is probably crucial for Mg(2+) binding and, consequently, for the gamma-phosphate positioning of ATP.

Its subcellular location is the cytoplasm. It carries out the reaction UDP-N-acetyl-alpha-D-muramoyl-L-alanyl-D-glutamate + L-lysine + ATP = UDP-N-acetyl-alpha-D-muramoyl-L-alanyl-gamma-D-glutamyl-L-lysine + ADP + phosphate + H(+). It functions in the pathway cell wall biogenesis; peptidoglycan biosynthesis. Functionally, catalyzes the addition of L-lysine to the nucleotide precursor UDP-N-acetylmuramoyl-L-alanyl-D-glutamate (UMAG) in the biosynthesis of bacterial cell-wall peptidoglycan. Cannot use diaminopimelate as substrate. Can accept L-ornithine as substrate, but the efficiency is 400-fold lower than that with L-lysine. Seems to have a role in beta-lactam antibiotic resistance. In Staphylococcus aureus (strain NCTC 8325 / PS 47), this protein is UDP-N-acetylmuramoyl-L-alanyl-D-glutamate--L-lysine ligase.